A 231-amino-acid polypeptide reads, in one-letter code: Sec-independent protein translocase protein TatB (231 aa).

Residues 1–21 (MFDIGFSELLLFGVIALIVLG) traverse the membrane as a helical segment. The segment at 77-168 (MRREMAEMRG…SLKTDFNDNA (92 aa)) is disordered. Residues 101 to 111 (ASRDLVDDAKP) are compositionally biased toward basic and acidic residues. Positions 148–157 (SEQPSAQGDN) are enriched in polar residues.

This sequence belongs to the TatB family. The Tat system comprises two distinct complexes: a TatABC complex, containing multiple copies of TatA, TatB and TatC subunits, and a separate TatA complex, containing only TatA subunits. Substrates initially bind to the TatABC complex, which probably triggers association of the separate TatA complex to form the active translocon.

The protein resides in the cell inner membrane. Part of the twin-arginine translocation (Tat) system that transports large folded proteins containing a characteristic twin-arginine motif in their signal peptide across membranes. Together with TatC, TatB is part of a receptor directly interacting with Tat signal peptides. TatB may form an oligomeric binding site that transiently accommodates folded Tat precursor proteins before their translocation. The polypeptide is Sec-independent protein translocase protein TatB (Psychrobacter cryohalolentis (strain ATCC BAA-1226 / DSM 17306 / VKM B-2378 / K5)).